The sequence spans 654 residues: MLHQGIILREGHVTRTIYNLIKDKRYEDVIECITNIGEAANTRAGLSTLGHCYYHAQKYEEAATCYEQLCQLAPKEAKYRFYYAQSLYQAGIFAEALRVLKQISDQEEELREHCLQLQSAILYSSEDYAGAQSLLNQRAGGTADTLNDEGCLLYQADQHESAVQRFQAALQVGGFNPLVAYNVALAHFQRKQRAQALDYTSEIVERGVRNHPELGIGAQVDTDGSARSVGNPITMAMSGITQALNLKAALEYQDGNEEGAREALLDLPPRAESELDPVTLHNMALTDVQGPVAGLRKLAFLLQLGAPSCPKETFANILLICCRHELYETAADILAEHTDLTYKYLSQYLYELLDALITAQTSVELAEKKLGTLASSLAGKLRSLAAKVQEVRATNEQHALRDALKDYEQALELYLPVVMARAWISWRDDDFVGAEREFHSSAEFCSENAVWRLNAGHVLFMQGDKYNEAAAFYEPIVRQHSDDIMSVSAAVLANLCVSYIMTFQNEEAEELMRKVEKAEELKGNLGKQYHHLCIVNLVVGTLYCAKSNYEFGLTRIAHALEGGAGGRLYADTWLHVKRCILGLLTGMAKQNIILPYTAVQEVLGFLRSCEAYGLFTPANIFTATEQVPEEPLTIGLEARKLRLLLLKLSEYENC.

7 TPR repeats span residues 10 to 43 (EGHVTRTIYNLIKDKRYEDVIECITNIGEAANTR), 44 to 76 (AGLSTLGHCYYHAQKYEEAATCYEQLCQLAPKE), 143 to 176 (ADTLNDEGCLLYQADQHESAVQRFQAALQVGGFN), 178 to 210 (LVAYNVALAHFQRKQRAQALDYTSEIVERGVRN), 384 to 417 (LAAKVQEVRATNEQHALRDALKDYEQALELYLPV), 449 to 483 (AVWRLNAGHVLFMQGDKYNEAAAFYEPIVRQHSDD), and 533 to 566 (CIVNLVVGTLYCAKSNYEFGLTRIAHALEGGAGG).

This sequence belongs to the TTC30/dfy-1/fleer family.

It localises to the cell projection. The protein resides in the cilium. Its function is as follows. Required for polyglutamylation of axonemal tubulin in sensory cilia. Plays a role in anterograde intraflagellar transport (IFT), the process by which cilia precursors are transported from the base of the cilium to the site of their incorporation at the tip. This chain is Tetratricopeptide repeat protein 30 homolog, found in Drosophila pseudoobscura pseudoobscura (Fruit fly).